Here is a 199-residue protein sequence, read N- to C-terminus: Crossover junction endodeoxyribonuclease RuvC (199 aa).

Residues aspartate 17, glutamate 76, and aspartate 148 contribute to the active site. Aspartate 17, glutamate 76, and aspartate 148 together coordinate Mg(2+).

Belongs to the RuvC family. As to quaternary structure, homodimer which binds Holliday junction (HJ) DNA. The HJ becomes 2-fold symmetrical on binding to RuvC with unstacked arms; it has a different conformation from HJ DNA in complex with RuvA. In the full resolvosome a probable DNA-RuvA(4)-RuvB(12)-RuvC(2) complex forms which resolves the HJ. It depends on Mg(2+) as a cofactor.

The protein localises to the cytoplasm. The catalysed reaction is Endonucleolytic cleavage at a junction such as a reciprocal single-stranded crossover between two homologous DNA duplexes (Holliday junction).. Functionally, the RuvA-RuvB-RuvC complex processes Holliday junction (HJ) DNA during genetic recombination and DNA repair. Endonuclease that resolves HJ intermediates. Cleaves cruciform DNA by making single-stranded nicks across the HJ at symmetrical positions within the homologous arms, yielding a 5'-phosphate and a 3'-hydroxyl group; requires a central core of homology in the junction. The consensus cleavage sequence is 5'-(A/T)TT(C/G)-3'. Cleavage occurs on the 3'-side of the TT dinucleotide at the point of strand exchange. HJ branch migration catalyzed by RuvA-RuvB allows RuvC to scan DNA until it finds its consensus sequence, where it cleaves and resolves the cruciform DNA. This is Crossover junction endodeoxyribonuclease RuvC from Mannheimia succiniciproducens (strain KCTC 0769BP / MBEL55E).